The primary structure comprises 173 residues: Photosystem I assembly protein Ycf3 (173 aa).

3 TPR repeats span residues 35-68 (AFSY…EEDP), 72-105 (SYIL…NFKL), and 120-153 (GVQA…APDN).

This sequence belongs to the Ycf3 family.

It is found in the plastid. The protein resides in the chloroplast thylakoid membrane. Essential for the assembly of the photosystem I (PSI) complex. May act as a chaperone-like factor to guide the assembly of the PSI subunits. This is Photosystem I assembly protein Ycf3 from Pyropia yezoensis (Susabi-nori).